We begin with the raw amino-acid sequence, 174 residues long: DNA replication protein 17 (174 aa).

It belongs to the phi29likevirus protein p56 family. Homodimer. Interacts with the histone-like protein p6; this interaction optimizes the binding of protein p6 at the viral DNA ends, thus favoring the initiation of replication.

Its function is as follows. Involved in the replication of viral DNA. It is required at the very beginning of the virus amplification, conditions in which a low number of viral DNA molecules enter the host cell, possibly to recruit the limiting amount of initiation factors at the replication origins. Once the infection process is established and the other replication proteins reach optimal concentration, it becomes dispensable. Optimizes the binding of protein p6 at the viral DNA ends, thus favoring the initiation of replication. The chain is DNA replication protein 17 (17) from Bacillus subtilis (Bacteriophage PZA).